The primary structure comprises 316 residues: 4-diphosphocytidyl-2-C-methyl-D-erythritol kinase (316 aa).

Lys14 is an active-site residue. Pro96–Ser106 provides a ligand contact to ATP. Residue Asp138 is part of the active site.

Belongs to the GHMP kinase family. IspE subfamily.

It catalyses the reaction 4-CDP-2-C-methyl-D-erythritol + ATP = 4-CDP-2-C-methyl-D-erythritol 2-phosphate + ADP + H(+). It functions in the pathway isoprenoid biosynthesis; isopentenyl diphosphate biosynthesis via DXP pathway; isopentenyl diphosphate from 1-deoxy-D-xylulose 5-phosphate: step 3/6. Catalyzes the phosphorylation of the position 2 hydroxy group of 4-diphosphocytidyl-2C-methyl-D-erythritol. This is 4-diphosphocytidyl-2-C-methyl-D-erythritol kinase from Solibacter usitatus (strain Ellin6076).